The following is a 361-amino-acid chain: MAGNTIGQLFRVTTFGESHGLALGCIVDGVPPGIPLTEADLQHDLDRRRPGTSRYTTQRREPDQVKILSGVFEGVTTGTSIGLLIENTDQRSQDYSAIKDVFRPGHADYTYEQKYGLRDYRGGGRSSARETAMRVAAGAIAKKYLSEKFGIEIRGCLTQMGDIPLEIKDWSLVEQNPFFCPDPDKIDALDELMRALKKEGDSIGAKVTVVASGVPAGLGEPVFDRLDADIAHALMSINAVKGVEIGDGFDVVALRGSQNRDEITKDGFQSNHAGGIFGGISSGQQIIAHMALKPTSSITVPGRTINRFGEEVEMITKGRHDPCVGIRAVPIAEAMLAIVLMDHLLRQRAQNADVKTDIPRW.

NADP(+)-binding residues include R48 and R54. FMN is bound by residues 125–127, 238–239, G278, 293–297, and R319; these read RSS, NA, and KPTSS.

It belongs to the chorismate synthase family. As to quaternary structure, homotetramer. FMNH2 is required as a cofactor.

The catalysed reaction is 5-O-(1-carboxyvinyl)-3-phosphoshikimate = chorismate + phosphate. The protein operates within metabolic intermediate biosynthesis; chorismate biosynthesis; chorismate from D-erythrose 4-phosphate and phosphoenolpyruvate: step 7/7. In terms of biological role, catalyzes the anti-1,4-elimination of the C-3 phosphate and the C-6 proR hydrogen from 5-enolpyruvylshikimate-3-phosphate (EPSP) to yield chorismate, which is the branch point compound that serves as the starting substrate for the three terminal pathways of aromatic amino acid biosynthesis. This reaction introduces a second double bond into the aromatic ring system. The chain is Chorismate synthase from Shigella flexneri serotype 5b (strain 8401).